A 340-amino-acid chain; its full sequence is Probable peroxidase 61 (340 aa).

A signal peptide spans Met1–Ala25. 4 disulfide bridges follow: Cys46-Cys122, Cys79-Cys84, Cys128-Cys331, and Cys205-Cys237. N-linked (GlcNAc...) asparagine glycosylation occurs at Asn63. Arg73 is an active-site residue. Residues Asp78, Val81, Gly83, Asp85, and Ser87 each contribute to the Ca(2+) site. Position 168 (Pro168) interacts with substrate. His198 lines the heme b pocket. Ser199 provides a ligand contact to Ca(2+). An N-linked (GlcNAc...) asparagine glycan is attached at Asn226. Ca(2+) is bound by residues Asp255 and Ser258.

Belongs to the peroxidase family. Classical plant (class III) peroxidase subfamily. Requires heme b as cofactor. Ca(2+) is required as a cofactor.

The protein resides in the secreted. The enzyme catalyses 2 a phenolic donor + H2O2 = 2 a phenolic radical donor + 2 H2O. Its function is as follows. Removal of H(2)O(2), oxidation of toxic reductants, biosynthesis and degradation of lignin, suberization, auxin catabolism, response to environmental stresses such as wounding, pathogen attack and oxidative stress. The enzyme activity has to be proved. This chain is Probable peroxidase 61 (PER61), found in Arabidopsis thaliana (Mouse-ear cress).